We begin with the raw amino-acid sequence, 630 residues long: Putative lipase atg15 (630 aa).

At 1–20 the chain is on the cytoplasmic side; the sequence is MKSSQRRIKRHAMRDMSIST. Residues 21–40 form a helical; Signal-anchor for type II membrane protein membrane-spanning segment; sequence LLLSVVLLPSVVSANDHVYF. Residues 41-630 are Lumenal-facing; it reads NPPSPGSPFL…WGSDIEHYEI (590 aa). Asparagine 200, asparagine 222, asparagine 280, and asparagine 304 each carry an N-linked (GlcNAc...) asparagine glycan. Serine 320 (charge relay system) is an active-site residue. The N-linked (GlcNAc...) asparagine glycan is linked to asparagine 466. Residues 577–589 show a composition bias toward polar residues; sequence SVTAPPFSTSTSS. The tract at residues 577–599 is disordered; sequence SVTAPPFSTSTSSDHVRADHSIG.

The protein belongs to the AB hydrolase superfamily. Lipase family. In terms of assembly, binds to both phosphatidylinositol (PI) and phosphatidylinositol 3,5-bisphosphate (PIP2).

Its subcellular location is the endosome. It is found in the multivesicular body membrane. It localises to the prevacuolar compartment membrane. It carries out the reaction a triacylglycerol + H2O = a diacylglycerol + a fatty acid + H(+). Its function is as follows. Lipase which is essential for lysis of subvacuolar cytoplasm to vacuole targeted bodies and intravacuolar autophagic bodies. Involved in the lysis of intravacuolar multivesicular body (MVB) vesicles. The intravacuolar membrane disintegration by atg15 is critical to life span extension. The chain is Putative lipase atg15 (atg15) from Aspergillus clavatus (strain ATCC 1007 / CBS 513.65 / DSM 816 / NCTC 3887 / NRRL 1 / QM 1276 / 107).